The chain runs to 374 residues: MWKISNENDIFKKRKPLPPKKSEESQPELTPWQKQNQEYLKKQAEEAASKGENEQAEVTITLQEQSQEEPQQHLPQETVEEEEHFADRLPNVKKTRNKRLYRRLAFILTCLGTAILVALYFVSPLSRLSEVTVSGNKSVESQAIIQQSKLETGSGLWEQYSNRNYFSANIQKKFPIIKKANIKLNGINSFKIDIQEYQIVALAATKGGYHPILENGKTLAETTKAAESGKPIFENFKEDKLIPELMASYNKLPQEIKQGISEIKYAPSKTNKDLINVYMNDGNRVIVNISDLSEKMAYYSQVAEQMDKPGIVDMEVGIFSYPYEKESEETGSEVSEDSAVENQEVVDPNAGVATDEANNGTPTNGENQEVQQAE.

Residues methionine 1 to proline 90 are disordered. Topologically, residues methionine 1–arginine 103 are cytoplasmic. The span at tyrosine 39–asparagine 53 shows a compositional bias: basic and acidic residues. Positions alanine 56 to proline 75 are enriched in polar residues. Residues leucine 104–proline 124 form a helical membrane-spanning segment. Residues leucine 125–glutamate 374 lie on the Extracellular side of the membrane. A POTRA domain is found at serine 126–tyrosine 197. Positions lysine 325–glutamate 374 are disordered. Acidic residues predominate over residues glutamate 326 to alanine 339. The span at glutamate 356–glutamate 374 shows a compositional bias: polar residues.

This sequence belongs to the FtsQ/DivIB family. DivIB subfamily.

The protein localises to the cell membrane. Cell division protein that may be involved in stabilizing or promoting the assembly of the division complex. The polypeptide is Cell division protein DivIB (Enterococcus faecalis (strain ATCC 700802 / V583)).